A 371-amino-acid chain; its full sequence is Zinc finger CCCH domain-containing protein 21 (371 aa).

The segment at 1-64 (MPPKQQPKAD…AAKKKKEEEK (64 aa)) is disordered. The segment covering 10-23 (DLAKKQKQVEDKTF) has biased composition (basic and acidic residues). Over residues 34 to 46 (VQKYVQSLKQSVQ) the composition is skewed to polar residues. C3H1-type zinc fingers lie at residues 88–115 (DPKSILCEFFKAGQCQKGFKCKFSHDLN) and 159–197 (KPTDIVCKYFLDAVEKKQYGWFWSCPNGGKECHYRHALP). 2 coiled-coil regions span residues 205-237 (QMKALLEEESSKKLAVEDEIENERAKLQTATQM) and 283-317 (FVDDAEACEEYEREREQEETEQKAKNKEAEAGTSK). Residues 290–371 (CEEYEREREQ…IREPNDEGSS (82 aa)) are disordered. Positions 292 to 312 (EYEREREQEETEQKAKNKEAE) are enriched in basic and acidic residues. The span at 330–352 (NEEEEDDDDDDDDLDMDELDELE) shows a compositional bias: acidic residues.

This Arabidopsis thaliana (Mouse-ear cress) protein is Zinc finger CCCH domain-containing protein 21.